The sequence spans 360 residues: NAD(P)H-quinone oxidoreductase subunit 1, chloroplastic (360 aa).

The next 9 helical transmembrane spans lie at 27-47 (IWIFVPIFSLILGIITGVLVI), 98-118 (FSIGPSIAVISILLSYSVIPF), 129-149 (IGIFLWIAISSIAPIGLLMSG), 165-185 (AAQSISYEIPLTLCVLSISLL), 203-223 (FWGWNLWRQPIGFIIFLISSL), 248-268 (YSGIKFGLFYVASYLNLLISS), 269-289 (LFVTVLYLGGWNISIPYISIL), 297-317 (IFGTTIGIFITLAKTYLFLFI), and 340-360 (FLLPISLGNLLLTTSFQLFSL).

This sequence belongs to the complex I subunit 1 family. NDH is composed of at least 16 different subunits, 5 of which are encoded in the nucleus.

It localises to the plastid. It is found in the chloroplast thylakoid membrane. The enzyme catalyses a plastoquinone + NADH + (n+1) H(+)(in) = a plastoquinol + NAD(+) + n H(+)(out). It carries out the reaction a plastoquinone + NADPH + (n+1) H(+)(in) = a plastoquinol + NADP(+) + n H(+)(out). Its function is as follows. NDH shuttles electrons from NAD(P)H:plastoquinone, via FMN and iron-sulfur (Fe-S) centers, to quinones in the photosynthetic chain and possibly in a chloroplast respiratory chain. The immediate electron acceptor for the enzyme in this species is believed to be plastoquinone. Couples the redox reaction to proton translocation, and thus conserves the redox energy in a proton gradient. This chain is NAD(P)H-quinone oxidoreductase subunit 1, chloroplastic, found in Barbarea verna (Land cress).